The primary structure comprises 408 residues: Energy-coupling factor transporter ATP-binding protein EcfA1 (408 aa).

An ABC transporter domain is found at 140-374 (IEIKNLSFKY…KEFLRNIQLD (235 aa)). 174–181 (GHNGSGKS) provides a ligand contact to ATP.

The protein belongs to the ABC transporter superfamily. Energy-coupling factor EcfA family. In terms of assembly, forms a stable energy-coupling factor (ECF) transporter complex composed of 2 membrane-embedded substrate-binding proteins (S component), 2 ATP-binding proteins (A component) and 2 transmembrane proteins (T component).

It localises to the cell membrane. In terms of biological role, ATP-binding (A) component of a common energy-coupling factor (ECF) ABC-transporter complex. Unlike classic ABC transporters this ECF transporter provides the energy necessary to transport a number of different substrates. This chain is Energy-coupling factor transporter ATP-binding protein EcfA1, found in Mycoplasma capricolum subsp. capricolum (strain California kid / ATCC 27343 / NCTC 10154).